Reading from the N-terminus, the 686-residue chain is U3 small nucleolar RNA-associated protein 4 homolog (686 aa).

14 WD repeats span residues 7–50, 51–92, 93–135, 136–181, 182–226, 227–275, 276–317, 318–377, 378–427, 428–475, 476–516, 517–566, 567–627, and 628–666; these read HRVR…ANYF, QEKF…QALN, IKYA…PDKI, QFER…AVHK, MIVD…SATG, TLVK…SSEK, QWVR…LMEK, VEVK…PLSK, NADH…NISL, KRVS…KHLH, AFQP…VKQL, KLHC…WSRT, VQKQ…FPPT, and NESDVIRRRTAHAFKISKIYKPLLFMDLLDERTLVAVER. A Glycyl lysine isopeptide (Lys-Gly) (interchain with G-Cter in SUMO2) cross-link involves residue Lys-321.

As to quaternary structure, interacts with HIVEP1 Interacts with NOL11. Part of the small subunit (SSU) processome, composed of more than 70 proteins and the RNA chaperone small nucleolar RNA (snoRNA) U3. May be a component of the proposed t-UTP subcomplex of the ribosomal small subunit (SSU) processome containing at least UTP4, WDR43, HEATR1, UTP15, WDR75. In terms of processing, may be phosphorylated during mitosis; may control the association of this protein with WRD43 and UTP15.

It is found in the nucleus. The protein localises to the nucleolus. It localises to the chromosome. In terms of biological role, ribosome biogenesis factor. Involved in nucleolar processing of pre-18S ribosomal RNA. Part of the small subunit (SSU) processome, first precursor of the small eukaryotic ribosomal subunit. During the assembly of the SSU processome in the nucleolus, many ribosome biogenesis factors, an RNA chaperone and ribosomal proteins associate with the nascent pre-rRNA and work in concert to generate RNA folding, modifications, rearrangements and cleavage as well as targeted d Involved in SSU pre-rRNA processing at sites A', A0, 1 and 2b. Required for optimal pre-ribosomal RNA transcription by RNA polymerase. May be a transcriptional regulator. Its function is as follows. (Microbial infection) Acts as a positive regulator of HIVEP1 which specifically binds to the DNA sequence 5'-GGGACTTTCC-3' found in enhancer elements of numerous viral promoters such as those of HIV-1, SV40, or CMV. This Homo sapiens (Human) protein is U3 small nucleolar RNA-associated protein 4 homolog.